The following is a 321-amino-acid chain: GTP 3',8-cyclase (321 aa).

The Radical SAM core domain occupies 5 to 233 (SFNRVIDYIR…QGSSKIYTLE (229 aa)). Arg14 is a GTP binding site. Cys21 and Cys25 together coordinate [4Fe-4S] cluster. Tyr27 lines the S-adenosyl-L-methionine pocket. Cys28 lines the [4Fe-4S] cluster pocket. Residue Arg64 coordinates GTP. Position 68 (Gly68) interacts with S-adenosyl-L-methionine. Ser95 contacts GTP. Residue Ser119 coordinates S-adenosyl-L-methionine. Lys155 is a GTP binding site. Met189 contacts S-adenosyl-L-methionine. Residues Cys249 and Cys252 each contribute to the [4Fe-4S] cluster site. 254–256 (RIR) is a binding site for GTP. Cys266 lines the [4Fe-4S] cluster pocket.

It belongs to the radical SAM superfamily. MoaA family. In terms of assembly, monomer and homodimer. The cofactor is [4Fe-4S] cluster.

It carries out the reaction GTP + AH2 + S-adenosyl-L-methionine = (8S)-3',8-cyclo-7,8-dihydroguanosine 5'-triphosphate + 5'-deoxyadenosine + L-methionine + A + H(+). Its pathway is cofactor biosynthesis; molybdopterin biosynthesis. Catalyzes the cyclization of GTP to (8S)-3',8-cyclo-7,8-dihydroguanosine 5'-triphosphate. This is GTP 3',8-cyclase from Helicobacter pylori (strain J99 / ATCC 700824) (Campylobacter pylori J99).